A 545-amino-acid polypeptide reads, in one-letter code: CTP synthase (545 aa).

Positions 1 to 266 are amidoligase domain; that stretch reads MTTRYIFVTG…DDLVVKRFGL (266 aa). Residue Ser14 coordinates CTP. UTP is bound at residue Ser14. ATP is bound by residues 15-20 and Asp72; that span reads SLGKGI. Residues Asp72 and Glu140 each coordinate Mg(2+). Residues 147–149, 187–192, and Lys223 each bind CTP; these read DIE and KTKPTQ. Residues 187 to 192 and Lys223 contribute to the UTP site; that span reads KTKPTQ. ATP is bound at residue 239–241; the sequence is KDV. Residues 291-542 enclose the Glutamine amidotransferase type-1 domain; the sequence is VIGMVGKYIE…IAAASAHQKR (252 aa). Residue Gly352 coordinates L-glutamine. The active-site Nucleophile; for glutamine hydrolysis is the Cys379. L-glutamine-binding positions include 380 to 383, Glu403, and Arg470; that span reads LGMQ. Active-site residues include His515 and Glu517.

This sequence belongs to the CTP synthase family. As to quaternary structure, homotetramer.

It carries out the reaction UTP + L-glutamine + ATP + H2O = CTP + L-glutamate + ADP + phosphate + 2 H(+). The catalysed reaction is L-glutamine + H2O = L-glutamate + NH4(+). The enzyme catalyses UTP + NH4(+) + ATP = CTP + ADP + phosphate + 2 H(+). Its pathway is pyrimidine metabolism; CTP biosynthesis via de novo pathway; CTP from UDP: step 2/2. With respect to regulation, allosterically activated by GTP, when glutamine is the substrate; GTP has no effect on the reaction when ammonia is the substrate. The allosteric effector GTP functions by stabilizing the protein conformation that binds the tetrahedral intermediate(s) formed during glutamine hydrolysis. Inhibited by the product CTP, via allosteric rather than competitive inhibition. Functionally, catalyzes the ATP-dependent amination of UTP to CTP with either L-glutamine or ammonia as the source of nitrogen. Regulates intracellular CTP levels through interactions with the four ribonucleotide triphosphates. This Shewanella baltica (strain OS223) protein is CTP synthase.